The sequence spans 280 residues: 3-deoxy-manno-octulosonate cytidylyltransferase (280 aa).

The protein belongs to the KdsB family.

The protein localises to the cytoplasm. The catalysed reaction is 3-deoxy-alpha-D-manno-oct-2-ulosonate + CTP = CMP-3-deoxy-beta-D-manno-octulosonate + diphosphate. It functions in the pathway nucleotide-sugar biosynthesis; CMP-3-deoxy-D-manno-octulosonate biosynthesis; CMP-3-deoxy-D-manno-octulosonate from 3-deoxy-D-manno-octulosonate and CTP: step 1/1. The protein operates within bacterial outer membrane biogenesis; lipopolysaccharide biosynthesis. Its function is as follows. Activates KDO (a required 8-carbon sugar) for incorporation into bacterial lipopolysaccharide in Gram-negative bacteria. The sequence is that of 3-deoxy-manno-octulosonate cytidylyltransferase from Colwellia psychrerythraea (strain 34H / ATCC BAA-681) (Vibrio psychroerythus).